Consider the following 313-residue polypeptide: Ribosomal RNA small subunit methyltransferase H (313 aa).

S-adenosyl-L-methionine contacts are provided by residues 34–36 (GGH), Asp-54, Phe-81, Asp-102, and Gln-109. The segment at 289 to 313 (IAGPEETDRNPRARSAKLRAAEKLG) is disordered.

This sequence belongs to the methyltransferase superfamily. RsmH family.

The protein localises to the cytoplasm. The enzyme catalyses cytidine(1402) in 16S rRNA + S-adenosyl-L-methionine = N(4)-methylcytidine(1402) in 16S rRNA + S-adenosyl-L-homocysteine + H(+). Its function is as follows. Specifically methylates the N4 position of cytidine in position 1402 (C1402) of 16S rRNA. The polypeptide is Ribosomal RNA small subunit methyltransferase H (Trichlorobacter lovleyi (strain ATCC BAA-1151 / DSM 17278 / SZ) (Geobacter lovleyi)).